We begin with the raw amino-acid sequence, 173 residues long: Shikimate kinase (173 aa).

An ATP-binding site is contributed by 14 to 19 (GAGKST). Residue Ser-18 participates in Mg(2+) binding. Asp-36, Arg-60, and Gly-82 together coordinate substrate. An ATP-binding site is contributed by Arg-120. Arg-140 contacts substrate. Residue Gln-157 coordinates ATP.

Belongs to the shikimate kinase family. In terms of assembly, monomer. Mg(2+) serves as cofactor.

Its subcellular location is the cytoplasm. The catalysed reaction is shikimate + ATP = 3-phosphoshikimate + ADP + H(+). It functions in the pathway metabolic intermediate biosynthesis; chorismate biosynthesis; chorismate from D-erythrose 4-phosphate and phosphoenolpyruvate: step 5/7. Catalyzes the specific phosphorylation of the 3-hydroxyl group of shikimic acid using ATP as a cosubstrate. The protein is Shikimate kinase of Baumannia cicadellinicola subsp. Homalodisca coagulata.